The chain runs to 636 residues: Phosphomethylpyrimidine synthase (636 aa).

Residues 48 to 70 form a disordered region; it reads DDTPTDFGGEKNPPVRVYDTSGP. Residues Asn231, Met260, Tyr289, His325, 345 to 347, 386 to 389, and Glu425 each bind substrate; these read SRG and DGLR. Zn(2+) is bound at residue His429. A substrate-binding site is contributed by Tyr452. Residue His493 coordinates Zn(2+). [4Fe-4S] cluster-binding residues include Cys573, Cys576, and Cys581.

This sequence belongs to the ThiC family. As to quaternary structure, homodimer. The cofactor is [4Fe-4S] cluster.

It carries out the reaction 5-amino-1-(5-phospho-beta-D-ribosyl)imidazole + S-adenosyl-L-methionine = 4-amino-2-methyl-5-(phosphooxymethyl)pyrimidine + CO + 5'-deoxyadenosine + formate + L-methionine + 3 H(+). The protein operates within cofactor biosynthesis; thiamine diphosphate biosynthesis. Functionally, catalyzes the synthesis of the hydroxymethylpyrimidine phosphate (HMP-P) moiety of thiamine from aminoimidazole ribotide (AIR) in a radical S-adenosyl-L-methionine (SAM)-dependent reaction. This Cellvibrio japonicus (strain Ueda107) (Pseudomonas fluorescens subsp. cellulosa) protein is Phosphomethylpyrimidine synthase.